The primary structure comprises 452 residues: tRNA-2-methylthio-N(6)-dimethylallyladenosine synthase (452 aa).

Positions 5–121 (RRYHITTFGC…LADLLAQVEA (117 aa)) constitute an MTTase N-terminal domain. [4Fe-4S] cluster contacts are provided by cysteine 14, cysteine 50, cysteine 84, cysteine 156, cysteine 160, and cysteine 163. Residues 142–379 (RDSTITAWVN…NHLVAQMAAD (238 aa)) form the Radical SAM core domain. The TRAM domain maps to 382 to 446 (QRYLGRTEEV…AFSLTGQILS (65 aa)).

It belongs to the methylthiotransferase family. MiaB subfamily. Monomer. The cofactor is [4Fe-4S] cluster.

It is found in the cytoplasm. The enzyme catalyses N(6)-dimethylallyladenosine(37) in tRNA + (sulfur carrier)-SH + AH2 + 2 S-adenosyl-L-methionine = 2-methylsulfanyl-N(6)-dimethylallyladenosine(37) in tRNA + (sulfur carrier)-H + 5'-deoxyadenosine + L-methionine + A + S-adenosyl-L-homocysteine + 2 H(+). In terms of biological role, catalyzes the methylthiolation of N6-(dimethylallyl)adenosine (i(6)A), leading to the formation of 2-methylthio-N6-(dimethylallyl)adenosine (ms(2)i(6)A) at position 37 in tRNAs that read codons beginning with uridine. This Synechococcus elongatus (strain ATCC 33912 / PCC 7942 / FACHB-805) (Anacystis nidulans R2) protein is tRNA-2-methylthio-N(6)-dimethylallyladenosine synthase.